The chain runs to 77 residues: NAD(P)H-quinone oxidoreductase subunit L (77 aa).

Transmembrane regions (helical) follow at residues 12–32 (FVAYVGIISIYLFVIPLILFY) and 47–67 (LGVYGLVFLFFPGLILFSPFL).

It belongs to the complex I NdhL subunit family. As to quaternary structure, NDH-1 can be composed of about 15 different subunits; different subcomplexes with different compositions have been identified which probably have different functions.

The protein localises to the cellular thylakoid membrane. It carries out the reaction a plastoquinone + NADH + (n+1) H(+)(in) = a plastoquinol + NAD(+) + n H(+)(out). The enzyme catalyses a plastoquinone + NADPH + (n+1) H(+)(in) = a plastoquinol + NADP(+) + n H(+)(out). Its function is as follows. NDH-1 shuttles electrons from an unknown electron donor, via FMN and iron-sulfur (Fe-S) centers, to quinones in the respiratory and/or the photosynthetic chain. The immediate electron acceptor for the enzyme in this species is believed to be plastoquinone. Couples the redox reaction to proton translocation, and thus conserves the redox energy in a proton gradient. Cyanobacterial NDH-1 also plays a role in inorganic carbon-concentration. This is NAD(P)H-quinone oxidoreductase subunit L from Prochlorococcus marinus (strain MIT 9515).